Here is a 59-residue protein sequence, read N- to C-terminus: Large ribosomal subunit protein bL32 (59 aa).

A compositionally biased stretch (basic residues) spans 1 to 19; it reads MPVPKRRMSRSNTRSRRAQ. A disordered region spans residues 1 to 20; that stretch reads MPVPKRRMSRSNTRSRRAQW.

The protein belongs to the bacterial ribosomal protein bL32 family.

The chain is Large ribosomal subunit protein bL32 from Acidothermus cellulolyticus (strain ATCC 43068 / DSM 8971 / 11B).